The chain runs to 123 residues: Small ribosomal subunit protein uS12 (123 aa).

Positions 1-25 (MPTINQLVRKPRKSRSALNKAPALQ) are disordered. Position 90 is a 3-methylthioaspartic acid (aspartate 90).

This sequence belongs to the universal ribosomal protein uS12 family. In terms of assembly, part of the 30S ribosomal subunit. Contacts proteins S8 and S17. May interact with IF1 in the 30S initiation complex.

In terms of biological role, with S4 and S5 plays an important role in translational accuracy. Its function is as follows. Interacts with and stabilizes bases of the 16S rRNA that are involved in tRNA selection in the A site and with the mRNA backbone. Located at the interface of the 30S and 50S subunits, it traverses the body of the 30S subunit contacting proteins on the other side and probably holding the rRNA structure together. The combined cluster of proteins S8, S12 and S17 appears to hold together the shoulder and platform of the 30S subunit. In Ehrlichia canis (strain Jake), this protein is Small ribosomal subunit protein uS12.